The chain runs to 936 residues: Protein NLP2 (936 aa).

Residues 99–130 (IMSVNPTEAEKTGKSSGELGSDDGAHQGSSMV) are disordered. In terms of domain architecture, RWP-RK spans 550–635 (QPSSIGHAEK…INSVHGVDRS (86 aa)). 3 disordered regions span residues 666 to 697 (PSVG…SCQL), 753 to 782 (CTNP…IQQE), and 794 to 827 (DKDH…RSAL). A compositionally biased stretch (basic and acidic residues) spans 671–682 (TVEENSDLKSEE). Polar residues predominate over residues 688–697 (DGSQRQSCQL). Low complexity predominate over residues 754–769 (TNPSSSLRPSSESTRN). The segment covering 770–781 (QIVGRNSPSIQQ) has biased composition (polar residues). The span at 801-815 (STSGMTDSSSGSASS) shows a compositional bias: low complexity. Residues 816-825 (HPTFKQNTRS) are compositionally biased toward polar residues. The region spanning 834–916 (ALTVKATYNG…RIVKLQVRDL (83 aa)) is the PB1 domain.

The protein resides in the nucleus. Its function is as follows. Probable transcription factor. The chain is Protein NLP2 from Oryza sativa subsp. japonica (Rice).